We begin with the raw amino-acid sequence, 913 residues long: WD repeat-containing protein 44 (913 aa).

Residues 1-14 (MASESDTEEFYDAP) show a composition bias toward acidic residues. Positions 1 to 24 (MASESDTEEFYDAPEDVHLGGGYP) are disordered. Position 2 is an N-acetylalanine (A2). The tract at residues 2–170 (ASESDTEEFY…SSTEQLNVLE (169 aa)) is binding activity. S3 carries the post-translational modification Phosphoserine. Residues 9-15 (EFYDAPE) carry the FFAT-like motif motif. Y11 bears the Phosphotyrosine mark. A phosphoserine mark is found at S27, S50, S66, S71, S81, S96, and S126. Residues 119–184 (EESQKAESQN…VLNKEAVEVK (66 aa)) adopt a coiled-coil conformation. Phosphothreonine occurs at positions 158 and 219. The tract at residues 205 to 348 (AVEEVAPAKP…RPRSNSGREL (144 aa)) is disordered. An important for interaction with ARHGAP26 AND ARHGAP10 region spans residues 211 to 257 (PAKPPRHLTPEPDIVASTKKPVPARPPPPTNFPPPRPPPPSRPAPPP). Residues 233-256 (PARPPPPTNFPPPRPPPPSRPAPP) show a composition bias toward pro residues. At S262 the chain carries Phosphoserine. Over residues 262–278 (SELEFETLKTPDIDVPK) the composition is skewed to basic and acidic residues. A Phosphothreonine modification is found at T271. Residues 280–311 (NITSDSLLTASMASESTVKDSQPSLDLASATS) are compositionally biased toward polar residues. The important for interaction with RAB11A stretch occupies residues 334 to 347 (VMGPQRPRSNSGRE). 2 positions are modified to phosphoserine; by PKB/AKT1: S342 and S344. T349 is modified (phosphothreonine). Disordered stretches follow at residues 397–424 (SNDA…LKQK) and 459–480 (DEVF…MPYT). Phosphoserine is present on residues S403, S470, S471, and S472. Residues 467–476 (DDPSSSDDEG) show a composition bias toward acidic residues. Phosphotyrosine is present on Y479. The stretch at 509–548 (EHMGAVWTMKFSHCGRLLASAGQDNVVRIWALKNAFDYFN) is one WD 1 repeat. Positions 557-593 (EGRVSPSPSQESLSSSKSDTDTGVCSGTDEDPDDKNA) are disordered. S561 and S565 each carry phosphoserine. A compositionally biased stretch (low complexity) spans 561-573 (SPSPSQESLSSSK). WD repeat units follow at residues 605-643 (GHTA…CLCC), 645-685 (QHID…VALW), 690-729 (GQTK…YHTQ), 740-779 (KVGR…LSMK), 784-823 (VNSS…SKFT), and 876-913 (VLDA…KNVS).

As to quaternary structure, interacts with the GTP-bound form of RAB11A and RAB11B. Interacts with GRAF1/ARHGAP26 or GRAF2/ARHGAP10; the interaction connects the endoplasmic reticulum (ER) with the endosomal tubule. Interacts (via FFAT-like motif) with VAPA (via MSP domain) or VAPB (via MSP domain); the interaction connects the ER with the endosomal tubule. Does not bind to RAB7, RAB10, RAB14, RAB35 and RAB8A. Phosphorylated by ATK1; the phosphorylation stabilizes its interaction with RAB11A and RAB11B.

The protein localises to the cytoplasm. Its subcellular location is the cytosol. It is found in the perinuclear region. It localises to the endosome membrane. The protein resides in the golgi apparatus. The protein localises to the trans-Golgi network. In terms of biological role, downstream effector for Rab11 which regulates Rab11 intracellular membrane trafficking functions such as endocytic recycling, intracellular ciliogenesis and protein export. ATK1-mediated phosphorylation of WDR44 induces binding to Rab11 which activates endocytic recycling of transferrin receptor back to the plasma membrane. When bound to Rab11, prevents the formation of the ciliogenic Rab11-Rabin8/RAB3IP-RAB11FIP3 complex, therefore inhibiting preciliary trafficking and ciliogenesis. Participates in neo-synthesized protein export by connecting the endoplasmic reticulum (ER) with the endosomal tubule via direct interactions with the integral ER proteins VAPA or VAPB and the endosomal protein GRAFs (GRAF1/ARHGAP26 or GRAF2/ARHGAP10), which facilitates the transfer of proteins such as E-cadherin, MPP14 and CFTR into a Rab8-Rab10-Rab11-dependent export route. The polypeptide is WD repeat-containing protein 44 (Homo sapiens (Human)).